The chain runs to 92 residues: Protein RnfH (92 aa).

It belongs to the UPF0125 (RnfH) family.

This Neisseria gonorrhoeae (strain NCCP11945) protein is Protein RnfH.